Consider the following 354-residue polypeptide: Ornithine transcarbamylase, mitochondrial (354 aa).

A mitochondrion-targeting transit peptide spans 1 to 32 (MLSNLRILLNKAALRKAHTSMVRNFRYGKPVQ). Lys70 is modified (N6-acetyllysine; alternate). The residue at position 70 (Lys70) is an N6-succinyllysine; alternate. Lys80 carries the post-translational modification N6-succinyllysine. The residue at position 88 (Lys88) is an N6-acetyllysine; alternate. Lys88 carries the N6-succinyllysine; alternate modification. 90–93 (STRT) contributes to the carbamoyl phosphate binding site. At Ser133 the chain carries Phosphoserine. Arg141 lines the carbamoyl phosphate pocket. Residue Lys144 is modified to N6-acetyllysine; alternate. Lys144 carries the post-translational modification N6-succinyllysine; alternate. Carbamoyl phosphate is bound by residues His168 and Gln171. Asn199 provides a ligand contact to L-ornithine. Lys221, Lys231, and Lys238 each carry N6-acetyllysine; alternate. N6-succinyllysine; alternate occurs at positions 221, 231, and 238. Asp263, Ser267, and Met268 together coordinate L-ornithine. N6-succinyllysine is present on residues Lys274 and Lys289. Lys292 is modified (N6-acetyllysine; alternate). An N6-succinyllysine; alternate modification is found at Lys292. Catalysis depends on Cys303, which acts as the Proton acceptor. Position 303–304 (303–304 (CL)) interacts with carbamoyl phosphate. The residue at position 307 (Lys307) is an N6-acetyllysine; alternate. At Lys307 the chain carries N6-succinyllysine; alternate. Arg330 serves as a coordination point for carbamoyl phosphate.

Belongs to the aspartate/ornithine carbamoyltransferase superfamily. OTCase family. As to quaternary structure, homotrimer. In terms of processing, acetylation at Lys-88 negatively regulates ornithine carbamoyltransferase activity in response to nutrient signals.

Its subcellular location is the mitochondrion matrix. The catalysed reaction is carbamoyl phosphate + L-ornithine = L-citrulline + phosphate + H(+). It functions in the pathway nitrogen metabolism; urea cycle; L-citrulline from L-ornithine and carbamoyl phosphate: step 1/1. Its activity is regulated as follows. Negatively regulated by lysine acetylation. Catalyzes the second step of the urea cycle, the condensation of carbamoyl phosphate with L-ornithine to form L-citrulline. The urea cycle ensures the detoxification of ammonia by converting it to urea for excretion. The protein is Ornithine transcarbamylase, mitochondrial of Rattus norvegicus (Rat).